Here is an 81-residue protein sequence, read N- to C-terminus: Acyl carrier protein (81 aa).

The region spanning 2 to 80 is the Carrier domain; sequence ASEQEILSGL…DAVAYISQAQ (79 aa). An O-(pantetheine 4'-phosphoryl)serine modification is found at Ser40.

The protein belongs to the acyl carrier protein (ACP) family. Post-translationally, 4'-phosphopantetheine is transferred from CoA to a specific serine of apo-ACP by AcpS. This modification is essential for activity because fatty acids are bound in thioester linkage to the sulfhydryl of the prosthetic group.

The protein resides in the cytoplasm. The protein operates within lipid metabolism; fatty acid biosynthesis. Functionally, carrier of the growing fatty acid chain in fatty acid biosynthesis. In Kineococcus radiotolerans (strain ATCC BAA-149 / DSM 14245 / SRS30216), this protein is Acyl carrier protein.